The primary structure comprises 461 residues: Tubulin gamma-1 chain (461 aa).

Residue 142 to 148 (AGGTGSG) participates in GTP binding.

Belongs to the tubulin family.

The protein localises to the cytoplasm. It is found in the cytoskeleton. The protein resides in the microtubule organizing center. Its subcellular location is the centrosome. In terms of biological role, tubulin is the major constituent of microtubules. The gamma chain is found at microtubule organizing centers (MTOC) such as the spindle poles or the centrosome, suggesting that it is involved in the minus-end nucleation of microtubule assembly. The chain is Tubulin gamma-1 chain from Euplotoides octocarinatus (Freshwater ciliate).